A 178-amino-acid chain; its full sequence is Large ribosomal subunit protein uL5 (178 aa).

This sequence belongs to the universal ribosomal protein uL5 family. As to quaternary structure, part of the 50S ribosomal subunit; contacts the 5S rRNA and probably tRNA. Forms a bridge to the 30S subunit in the 70S ribosome.

This is one of the proteins that bind and probably mediate the attachment of the 5S RNA into the large ribosomal subunit, where it forms part of the central protuberance. In the 70S ribosome it contacts protein S13 of the 30S subunit (bridge B1b), connecting the 2 subunits; this bridge is implicated in subunit movement. May contact the P site tRNA; the 5S rRNA and some of its associated proteins might help stabilize positioning of ribosome-bound tRNAs. This Archaeoglobus fulgidus (strain ATCC 49558 / DSM 4304 / JCM 9628 / NBRC 100126 / VC-16) protein is Large ribosomal subunit protein uL5.